A 195-amino-acid polypeptide reads, in one-letter code: Pyridoxal 5'-phosphate synthase subunit PdxT (195 aa).

46–48 (GES) contacts L-glutamine. Cysteine 78 functions as the Nucleophile in the catalytic mechanism. Residues arginine 107 and 136–137 (IR) contribute to the L-glutamine site. Catalysis depends on charge relay system residues histidine 173 and glutamate 175.

It belongs to the glutaminase PdxT/SNO family. In the presence of PdxS, forms a dodecamer of heterodimers. Only shows activity in the heterodimer.

The catalysed reaction is aldehydo-D-ribose 5-phosphate + D-glyceraldehyde 3-phosphate + L-glutamine = pyridoxal 5'-phosphate + L-glutamate + phosphate + 3 H2O + H(+). The enzyme catalyses L-glutamine + H2O = L-glutamate + NH4(+). The protein operates within cofactor biosynthesis; pyridoxal 5'-phosphate biosynthesis. Functionally, catalyzes the hydrolysis of glutamine to glutamate and ammonia as part of the biosynthesis of pyridoxal 5'-phosphate. The resulting ammonia molecule is channeled to the active site of PdxS. This is Pyridoxal 5'-phosphate synthase subunit PdxT from Dehalococcoides mccartyi (strain ATCC BAA-2266 / KCTC 15142 / 195) (Dehalococcoides ethenogenes (strain 195)).